The sequence spans 104 residues: Large ribosomal subunit protein eL36 (104 aa).

The protein belongs to the eukaryotic ribosomal protein eL36 family.

In Tetrahymena thermophila (strain SB210), this protein is Large ribosomal subunit protein eL36 (RPL36).